Consider the following 132-residue polypeptide: MGLGFKCRHIPPSVYCGGKKRRRRRSKRRRSRCGRSRRRKSCRGGRKTNNPFLNYLRVFRKKHCGWPQCRIAIEGAKCWCKMSGRDRKKYYNQACSMLKKRGRRRRRRSCRRRRRSCRRRRRRRRSCNTCPK.

Disordered regions lie at residues 17–46 and 96–115; these read GGKK…RGGR and SMLK…RRRR. Basic residues-rich tracts occupy residues 18–46 and 98–115; these read GKKR…RGGR and LKKR…RRRR.

The protein belongs to the UPF0771 family. In terms of tissue distribution, testis.

The protein resides in the nucleus. It is found in the chromosome. Functionally, protamines substitute for histones in the chromatin of sperm during the haploid phase of spermatogenesis. They compact sperm DNA into a highly condensed, stable and inactive complex. The polypeptide is Protamine (Anthonomus grandis (Mexican cotton boll weevil)).